The sequence spans 474 residues: Homocitrate synthase, mitochondrial (474 aa).

Positions 67–320 constitute a Pyruvate carboxyltransferase domain; the sequence is FQIIESTLRE…KSKYKLEKLK (254 aa). R75 is a binding site for 2-oxoglutarate. Mg(2+) is bound at residue E76. 2-oxoglutarate is bound by residues H135, R195, and T229. Positions 256 and 258 each coordinate Mg(2+). Residue H353 is the Proton acceptor of the active site.

It belongs to the alpha-IPM synthase/homocitrate synthase family. Homocitrate synthase LYS20/LYS21 subfamily. It depends on Mg(2+) as a cofactor. Requires Mn(2+) as cofactor.

The protein localises to the mitochondrion. The enzyme catalyses acetyl-CoA + 2-oxoglutarate + H2O = (2R)-homocitrate + CoA + H(+). It functions in the pathway amino-acid biosynthesis; L-lysine biosynthesis via AAA pathway; L-alpha-aminoadipate from 2-oxoglutarate: step 1/5. In terms of biological role, catalyzes the aldol-type condensation of 2-oxoglutarate with acetyl-CoA to yield homocitrate. Carries out the first step of the alpha-aminoadipate (AAA) lysine biosynthesis pathway. The polypeptide is Homocitrate synthase, mitochondrial (lys1) (Penicillium rubens (strain ATCC 28089 / DSM 1075 / NRRL 1951 / Wisconsin 54-1255) (Penicillium chrysogenum)).